The sequence spans 247 residues: Mannose-P-dolichol utilization defect 1 protein (247 aa).

Alanine 2 carries the N-acetylalanine modification. A PQ-loop 1 domain is found at 39–105 (KILLSKGLGL…NNFPFSSWGE (67 aa)). The next 7 helical transmembrane spans lie at 46–66 (LGLG…FKIL), 74–94 (LSLQ…IYSI), 103–123 (WGEA…VLHY), 128–145 (VKGV…LALL), 151–171 (LAVV…GKLL), 185–205 (LSAI…FTSV), and 213–233 (MAGV…QVLF). The PQ-loop 2 domain occupies 159 to 216 (ASNVPAVVVGKLLQAATNYHNGHTGQLSAITVFMLFGGSLARIFTSVQETGDPLMAGV).

Belongs to the MPDU1 (TC 2.A.43.3) family.

It localises to the membrane. Its function is as follows. Required for normal utilization of mannose-dolichol phosphate (Dol-P-Man) in the synthesis of N-linked and O-linked oligosaccharides and GPI anchors. The sequence is that of Mannose-P-dolichol utilization defect 1 protein (MPDU1) from Cricetulus griseus (Chinese hamster).